We begin with the raw amino-acid sequence, 228 residues long: Uracil-DNA glycosylase (228 aa).

Catalysis depends on Asp-65, which acts as the Proton acceptor.

This sequence belongs to the uracil-DNA glycosylase (UDG) superfamily. UNG family.

The protein localises to the cytoplasm. It catalyses the reaction Hydrolyzes single-stranded DNA or mismatched double-stranded DNA and polynucleotides, releasing free uracil.. Its function is as follows. Excises uracil residues from the DNA which can arise as a result of misincorporation of dUMP residues by DNA polymerase or due to deamination of cytosine. This Lacticaseibacillus paracasei (strain ATCC 334 / BCRC 17002 / CCUG 31169 / CIP 107868 / KCTC 3260 / NRRL B-441) (Lactobacillus paracasei) protein is Uracil-DNA glycosylase.